The primary structure comprises 297 residues: N-acetylmuramic acid 6-phosphate etherase (297 aa).

An SIS domain is found at 56–219; the sequence is AIEAFNKGGR…STISMIGIGK (164 aa). The active-site Proton donor is the glutamate 84. Residue glutamate 115 is part of the active site.

This sequence belongs to the GCKR-like family. MurNAc-6-P etherase subfamily. In terms of assembly, homodimer.

It catalyses the reaction N-acetyl-D-muramate 6-phosphate + H2O = N-acetyl-D-glucosamine 6-phosphate + (R)-lactate. The protein operates within amino-sugar metabolism; N-acetylmuramate degradation. Its function is as follows. Specifically catalyzes the cleavage of the D-lactyl ether substituent of MurNAc 6-phosphate, producing GlcNAc 6-phosphate and D-lactate. This Lactococcus lactis subsp. cremoris (strain MG1363) protein is N-acetylmuramic acid 6-phosphate etherase.